Here is a 159-residue protein sequence, read N- to C-terminus: Defense protein l(2)34Fc (159 aa).

An N-terminal signal peptide occupies residues 1–17; it reads MFRLLVLAACLAISVHA. Residues 18-159 enclose the Reelin domain; that stretch reads YSDGAPKAAC…GRVTKDIDVE (142 aa). A disulfide bond links C27 and C99.

The protein belongs to the insect defense protein family.

It localises to the secreted. In terms of biological role, may have antimicrobial activity. A late response immune regulated gene that is negatively regulated by spz during the immune response. The polypeptide is Defense protein l(2)34Fc (l(2)34Fc) (Drosophila melanogaster (Fruit fly)).